The primary structure comprises 266 residues: Imidazole glycerol phosphate synthase subunit HisF (266 aa).

Residues Asp-11 and Asp-130 contribute to the active site. The tract at residues 134–157 (RTPEEAARPGPDGAPRGEGWDVYS) is disordered.

The protein belongs to the HisA/HisF family. As to quaternary structure, heterodimer of HisH and HisF.

The protein localises to the cytoplasm. It catalyses the reaction 5-[(5-phospho-1-deoxy-D-ribulos-1-ylimino)methylamino]-1-(5-phospho-beta-D-ribosyl)imidazole-4-carboxamide + L-glutamine = D-erythro-1-(imidazol-4-yl)glycerol 3-phosphate + 5-amino-1-(5-phospho-beta-D-ribosyl)imidazole-4-carboxamide + L-glutamate + H(+). It functions in the pathway amino-acid biosynthesis; L-histidine biosynthesis; L-histidine from 5-phospho-alpha-D-ribose 1-diphosphate: step 5/9. IGPS catalyzes the conversion of PRFAR and glutamine to IGP, AICAR and glutamate. The HisF subunit catalyzes the cyclization activity that produces IGP and AICAR from PRFAR using the ammonia provided by the HisH subunit. In Paracidovorax citrulli (strain AAC00-1) (Acidovorax citrulli), this protein is Imidazole glycerol phosphate synthase subunit HisF.